Consider the following 278-residue polypeptide: Large ribosomal subunit protein uL2 (278 aa).

Positions 222–264 are disordered; the sequence is GVAMNPIDHPHGGGEGRTSGGRHPVTPWGKPTKGRKTRKNKAT.

The protein belongs to the universal ribosomal protein uL2 family. In terms of assembly, part of the 50S ribosomal subunit. Forms a bridge to the 30S subunit in the 70S ribosome.

One of the primary rRNA binding proteins. Required for association of the 30S and 50S subunits to form the 70S ribosome, for tRNA binding and peptide bond formation. It has been suggested to have peptidyltransferase activity; this is somewhat controversial. Makes several contacts with the 16S rRNA in the 70S ribosome. This chain is Large ribosomal subunit protein uL2, found in Phenylobacterium zucineum (strain HLK1).